Consider the following 149-residue polypeptide: Large ribosomal subunit protein bL9 (149 aa).

Belongs to the bacterial ribosomal protein bL9 family.

Binds to the 23S rRNA. The chain is Large ribosomal subunit protein bL9 from Aquifex aeolicus (strain VF5).